A 306-amino-acid polypeptide reads, in one-letter code: MSSTLRALLCLGLCLSQRISAPKQTLPKPIIRAESTYMVPKEKQATLCCQGSYGAVEYQLHFEGSLFAVERPKPPERINGVKFHIPDMNSRKAGRYSCIYRVGELWSERSDLLDLVVTEMYDTPTLSVHPGPEVTSGEKVTFYCRLDTATSMFLLLKEGRSRDVQRSYGKVQAEFPMGPVTTAHRGSYRCFGSYNNYAWSFPSEPVKLLVTGDIENTSLAPTDPTFPDSWDTCLLTRETGLQKDLALWDHTAQNLLRMGLAFLVLVALVCLLVEDWLSRKRTREQASRASTWEGRRRLNKHKDSEE.

A signal peptide spans 1–21; that stretch reads MSSTLRALLCLGLCLSQRISA. The Extracellular portion of the chain corresponds to 22–257; it reads PKQTLPKPII…WDHTAQNLLR (236 aa). 2 Ig-like domains span residues 42-100 and 137-192; these read EKQA…SCIY and GEKV…RCFG. Cystine bridges form between Cys49–Cys98 and Cys144–Cys190. Asn216 is a glycosylation site (N-linked (GlcNAc...) asparagine). Residues 258-278 form a helical membrane-spanning segment; the sequence is MGLAFLVLVALVCLLVEDWLS. Over 279-306 the chain is Cytoplasmic; sequence RKRTREQASRASTWEGRRRLNKHKDSEE.

Belongs to the natural cytotoxicity receptor (NCR) family. As to quaternary structure, interacts with CD3Z and FCER1G. As to expression, expressed in NK cells.

It localises to the cell membrane. In terms of biological role, cytotoxicity-activating receptor that may contribute to the increased efficiency of activated natural killer (NK) cells to mediate tumor cell lysis. The chain is Natural cytotoxicity triggering receptor 1 (NCR1) from Macaca fascicularis (Crab-eating macaque).